Reading from the N-terminus, the 256-residue chain is Geranylgeranylglyceryl phosphate synthase (256 aa).

Residues D28 and S53 each coordinate Mg(2+). Residues 172-178, 203-204, and 225-226 each bind sn-glycerol 1-phosphate; these read YLEAGSG, GG, and GT.

This sequence belongs to the GGGP/HepGP synthase family. Group II subfamily. Mg(2+) is required as a cofactor.

The protein resides in the cytoplasm. It carries out the reaction sn-glycerol 1-phosphate + (2E,6E,10E)-geranylgeranyl diphosphate = sn-3-O-(geranylgeranyl)glycerol 1-phosphate + diphosphate. The protein operates within membrane lipid metabolism; glycerophospholipid metabolism. In terms of biological role, prenyltransferase that catalyzes the transfer of the geranylgeranyl moiety of geranylgeranyl diphosphate (GGPP) to the C3 hydroxyl of sn-glycerol-1-phosphate (G1P). This reaction is the first ether-bond-formation step in the biosynthesis of archaeal membrane lipids. The sequence is that of Geranylgeranylglyceryl phosphate synthase from Methanococcus maripaludis (strain C7 / ATCC BAA-1331).